Here is a 363-residue protein sequence, read N- to C-terminus: Eukaryotic translation initiation factor 3 subunit H (363 aa).

Residues 13-163 (VQVEALVVMK…LRAFRLSTAF (151 aa)) enclose the MPN domain.

This sequence belongs to the eIF-3 subunit H family. In terms of assembly, component of the eukaryotic translation initiation factor 3 (eIF-3) complex.

The protein resides in the cytoplasm. Component of the eukaryotic translation initiation factor 3 (eIF-3) complex, which is involved in protein synthesis of a specialized repertoire of mRNAs and, together with other initiation factors, stimulates binding of mRNA and methionyl-tRNAi to the 40S ribosome. The eIF-3 complex specifically targets and initiates translation of a subset of mRNAs involved in cell proliferation. This chain is Eukaryotic translation initiation factor 3 subunit H, found in Pyricularia oryzae (strain 70-15 / ATCC MYA-4617 / FGSC 8958) (Rice blast fungus).